The chain runs to 372 residues: N-methyl-L-tryptophan oxidase (372 aa).

FAD is bound at residue 4 to 34 (DLIIIGSGSVGAAAGYYATRAGLNVLMTDAH). Cys308 is modified (S-8alpha-FAD cysteine).

Belongs to the MSOX/MTOX family. MTOX subfamily. As to quaternary structure, monomer. Requires FAD as cofactor.

It catalyses the reaction N(alpha)-methyl-L-tryptophan + O2 + H2O = L-tryptophan + formaldehyde + H2O2. Functionally, catalyzes the oxidative demethylation of N-methyl-L-tryptophan. The protein is N-methyl-L-tryptophan oxidase of Shigella dysenteriae serotype 1 (strain Sd197).